Reading from the N-terminus, the 322-residue chain is Extracellular metalloprotease AFUB_008060 (322 aa).

The first 22 residues, Met1 to Ala22, serve as a signal peptide directing secretion. 2 N-linked (GlcNAc...) asparagine glycosylation sites follow: Asn123 and Asn197. Position 233 (His233) interacts with Zn(2+). Glu234 is a catalytic residue. His237 contacts Zn(2+). The cysteines at positions 272 and 299 are disulfide-linked.

It belongs to the peptidase M43B family.

It localises to the secreted. In terms of biological role, secreted metalloproteinase that allows assimilation of proteinaceous substrates. Plays a pivotal role as a pathogenicity determinant during infections and contributes to the ability of the pathogen to persist within the mammalian host. The polypeptide is Extracellular metalloprotease AFUB_008060 (Aspergillus fumigatus (strain CBS 144.89 / FGSC A1163 / CEA10) (Neosartorya fumigata)).